A 154-amino-acid chain; its full sequence is Interleukin-2 (154 aa).

The first 20 residues, 1-20 (MYRMQLLSCIALSLALVTNS), serve as a signal peptide directing secretion. O-linked (GalNAc...) threonine glycosylation occurs at Thr23. A disulfide bond links Cys78 and Cys126.

The protein belongs to the IL-2 family.

It localises to the secreted. Functionally, cytokine produced by activated CD4-positive helper T-cells and to a lesser extend activated CD8-positive T-cells and natural killer (NK) cells that plays pivotal roles in the immune response and tolerance. Binds to a receptor complex composed of either the high-affinity trimeric IL-2R (IL2RA/CD25, IL2RB/CD122 and IL2RG/CD132) or the low-affinity dimeric IL-2R (IL2RB and IL2RG). Interaction with the receptor leads to oligomerization and conformation changes in the IL-2R subunits resulting in downstream signaling starting with phosphorylation of JAK1 and JAK3. In turn, JAK1 and JAK3 phosphorylate the receptor to form a docking site leading to the phosphorylation of several substrates including STAT5. This process leads to activation of several pathways including STAT, phosphoinositide-3-kinase/PI3K and mitogen-activated protein kinase/MAPK pathways. Functions as a T-cell growth factor and can increase NK-cell cytolytic activity as well. Promotes strong proliferation of activated B-cells and subsequently immunoglobulin production. Plays a pivotal role in regulating the adaptive immune system by controlling the survival and proliferation of regulatory T-cells, which are required for the maintenance of immune tolerance. Moreover, participates in the differentiation and homeostasis of effector T-cell subsets, including Th1, Th2, Th17 as well as memory CD8-positive T-cells. In Cercocebus atys (Sooty mangabey), this protein is Interleukin-2 (IL2).